Reading from the N-terminus, the 472-residue chain is Glutamate--tRNA ligase (472 aa).

Residues 8–18 carry the 'HIGH' region motif; sequence PSPTGFLHIGS. The 'KMSKS' region signature appears at 239-243; that stretch reads KLSKR. ATP is bound at residue Lys242.

The protein belongs to the class-I aminoacyl-tRNA synthetase family. Glutamate--tRNA ligase type 1 subfamily. Monomer.

It localises to the cytoplasm. The catalysed reaction is tRNA(Glu) + L-glutamate + ATP = L-glutamyl-tRNA(Glu) + AMP + diphosphate. Its function is as follows. Catalyzes the attachment of glutamate to tRNA(Glu) in a two-step reaction: glutamate is first activated by ATP to form Glu-AMP and then transferred to the acceptor end of tRNA(Glu). This Solibacter usitatus (strain Ellin6076) protein is Glutamate--tRNA ligase.